We begin with the raw amino-acid sequence, 133 residues long: Small ribosomal subunit protein eS24z (133 aa).

The interval 104–133 (KSRKQIKERKNRAKKIRGVKKTKAGDAKKK) is disordered. Basic residues predominate over residues 109–125 (IKERKNRAKKIRGVKKT).

Belongs to the eukaryotic ribosomal protein eS24 family.

The chain is Small ribosomal subunit protein eS24z (RPS24A) from Arabidopsis thaliana (Mouse-ear cress).